A 221-amino-acid chain; its full sequence is Deoxyribose-phosphate aldolase (221 aa).

Asp90 (proton donor/acceptor) is an active-site residue. Lys152 functions as the Schiff-base intermediate with acetaldehyde in the catalytic mechanism. The Proton donor/acceptor role is filled by Lys181.

It belongs to the DeoC/FbaB aldolase family. DeoC type 1 subfamily.

The protein localises to the cytoplasm. It carries out the reaction 2-deoxy-D-ribose 5-phosphate = D-glyceraldehyde 3-phosphate + acetaldehyde. It functions in the pathway carbohydrate degradation; 2-deoxy-D-ribose 1-phosphate degradation; D-glyceraldehyde 3-phosphate and acetaldehyde from 2-deoxy-alpha-D-ribose 1-phosphate: step 2/2. Functionally, catalyzes a reversible aldol reaction between acetaldehyde and D-glyceraldehyde 3-phosphate to generate 2-deoxy-D-ribose 5-phosphate. The polypeptide is Deoxyribose-phosphate aldolase (Exiguobacterium sp. (strain ATCC BAA-1283 / AT1b)).